The sequence spans 164 residues: Single-stranded DNA-binding protein 2 (164 aa).

The 105-residue stretch at 5-109 folds into the SSB domain; sequence INKVILVGNL…IVADEMQMLG (105 aa). A disordered region spans residues 105 to 164; the sequence is MQMLGGRSDGGGMGGGGERPQRQTSQRQDYAPRRQARQPSQSPQSSPPPMDDFADDDIPF. Positions 111 to 122 are enriched in gly residues; that stretch reads RSDGGGMGGGGE. Positions 159–164 match the Important for interaction with partner proteins motif; it reads DDDIPF.

In terms of assembly, homotetramer.

Plays an important role in DNA replication, recombination and repair. Binds to ssDNA and to an array of partner proteins to recruit them to their sites of action during DNA metabolism. This is Single-stranded DNA-binding protein 2 (ssb2) from Xylella fastidiosa (strain 9a5c).